Here is a 256-residue protein sequence, read N- to C-terminus: Pyridoxine 5'-phosphate synthase (256 aa).

Asn10 serves as a coordination point for 3-amino-2-oxopropyl phosphate. A 1-deoxy-D-xylulose 5-phosphate-binding site is contributed by 12 to 13 (DH). A 3-amino-2-oxopropyl phosphate-binding site is contributed by Arg21. His46 (proton acceptor) is an active-site residue. Positions 48 and 53 each coordinate 1-deoxy-D-xylulose 5-phosphate. The active-site Proton acceptor is Glu73. Residue Thr103 participates in 1-deoxy-D-xylulose 5-phosphate binding. The active-site Proton donor is His193. 3-amino-2-oxopropyl phosphate contacts are provided by residues Gly194 and 215-216 (GH).

Belongs to the PNP synthase family. Homooctamer; tetramer of dimers.

The protein resides in the cytoplasm. The catalysed reaction is 3-amino-2-oxopropyl phosphate + 1-deoxy-D-xylulose 5-phosphate = pyridoxine 5'-phosphate + phosphate + 2 H2O + H(+). The protein operates within cofactor biosynthesis; pyridoxine 5'-phosphate biosynthesis; pyridoxine 5'-phosphate from D-erythrose 4-phosphate: step 5/5. Functionally, catalyzes the complicated ring closure reaction between the two acyclic compounds 1-deoxy-D-xylulose-5-phosphate (DXP) and 3-amino-2-oxopropyl phosphate (1-amino-acetone-3-phosphate or AAP) to form pyridoxine 5'-phosphate (PNP) and inorganic phosphate. This is Pyridoxine 5'-phosphate synthase from Zymomonas mobilis subsp. mobilis (strain ATCC 31821 / ZM4 / CP4).